The following is a 168-amino-acid chain: Large ribosomal subunit protein uL16 (168 aa).

This sequence belongs to the universal ribosomal protein uL16 family.

This Thermofilum pendens (strain DSM 2475 / Hrk 5) protein is Large ribosomal subunit protein uL16.